A 131-amino-acid polypeptide reads, in one-letter code: Small ribosomal subunit protein uS11 (131 aa).

It belongs to the universal ribosomal protein uS11 family. Part of the 30S ribosomal subunit.

Functionally, located on the platform of the 30S subunit. The polypeptide is Small ribosomal subunit protein uS11 (Haloquadratum walsbyi (strain DSM 16790 / HBSQ001)).